We begin with the raw amino-acid sequence, 356 residues long: Protein pelota homolog (356 aa).

Belongs to the eukaryotic release factor 1 family. Pelota subfamily. As to quaternary structure, monomer. The cofactor is a divalent metal cation.

Its subcellular location is the cytoplasm. Functionally, may function in recognizing stalled ribosomes, interact with stem-loop structures in stalled mRNA molecules, and effect endonucleolytic cleavage of the mRNA. May play a role in the release non-functional ribosomes and degradation of damaged mRNAs. Has endoribonuclease activity. The polypeptide is Protein pelota homolog (Pyrococcus horikoshii (strain ATCC 700860 / DSM 12428 / JCM 9974 / NBRC 100139 / OT-3)).